We begin with the raw amino-acid sequence, 242 residues long: Uridylate kinase (242 aa).

12–15 (KLSG) contacts ATP. Residues 20-25 (GDEGFG) form an involved in allosteric activation by GTP region. Gly-54 contacts UMP. Residues Gly-55 and Arg-59 each contribute to the ATP site. UMP-binding positions include Asp-74 and 135–142 (TGSPFFTT). ATP is bound by residues Thr-162, Tyr-168, and Asp-171.

Belongs to the UMP kinase family. As to quaternary structure, homohexamer.

It localises to the cytoplasm. It carries out the reaction UMP + ATP = UDP + ADP. Its pathway is pyrimidine metabolism; CTP biosynthesis via de novo pathway; UDP from UMP (UMPK route): step 1/1. Allosterically activated by GTP. Inhibited by UTP. Functionally, catalyzes the reversible phosphorylation of UMP to UDP. This is Uridylate kinase from Pasteurella multocida (strain Pm70).